Reading from the N-terminus, the 63-residue chain is Sarcotoxin-1A (63 aa).

Positions 1 to 23 (MNFQNIFIFVALILAVFAGQSQA) are cleaved as a signal peptide. Residue arginine 62 is modified to Arginine amide.

It belongs to the cecropin family.

Its subcellular location is the secreted. In terms of biological role, sarcotoxins, which are potent bactericidal proteins, are produced in response to injury. They are cytotoxic to both Gram-positive and Gram-negative bacteria. The polypeptide is Sarcotoxin-1A (Sarcophaga peregrina (Flesh fly)).